Consider the following 248-residue polypeptide: Tyrosine recombinase XerD-like (248 aa).

Residues M1–Y72 form the Core-binding (CB) domain. The Tyr recombinase domain occupies D85–S248. Residues K149 and R213 contribute to the active site. The active-site O-(3'-phospho-DNA)-tyrosine intermediate is the Y245.

Belongs to the 'phage' integrase family. XerD-like subfamily.

It is found in the cytoplasm. In terms of biological role, putative tyrosine recombinase. Not involved in the cutting and rejoining of the recombining DNA molecules on dif(SL) site. The protein is Tyrosine recombinase XerD-like of Streptococcus pyogenes serotype M18 (strain MGAS8232).